A 768-amino-acid polypeptide reads, in one-letter code: DNA ligase (768 aa).

The span at M1–P11 shows a compositional bias: low complexity. A disordered region spans residues M1–P28. Residues D62–D66, S111–I112, and E148 each bind NAD(+). K150 serves as the catalytic N6-AMP-lysine intermediate. NAD(+) contacts are provided by R171, E238, K361, and K385. Zn(2+)-binding residues include C484, C487, C502, and C508. Residues A670–G759 enclose the BRCT domain.

This sequence belongs to the NAD-dependent DNA ligase family. LigA subfamily. The cofactor is Mg(2+). Mn(2+) is required as a cofactor.

It catalyses the reaction NAD(+) + (deoxyribonucleotide)n-3'-hydroxyl + 5'-phospho-(deoxyribonucleotide)m = (deoxyribonucleotide)n+m + AMP + beta-nicotinamide D-nucleotide.. Functionally, DNA ligase that catalyzes the formation of phosphodiester linkages between 5'-phosphoryl and 3'-hydroxyl groups in double-stranded DNA using NAD as a coenzyme and as the energy source for the reaction. It is essential for DNA replication and repair of damaged DNA. The polypeptide is DNA ligase (Leptothrix cholodnii (strain ATCC 51168 / LMG 8142 / SP-6) (Leptothrix discophora (strain SP-6))).